A 477-amino-acid chain; its full sequence is Glutamyl-tRNA(Gln) amidotransferase subunit A (477 aa).

Active-site charge relay system residues include Lys-76 and Ser-151. Ser-175 acts as the Acyl-ester intermediate in catalysis.

The protein belongs to the amidase family. GatA subfamily. In terms of assembly, heterotrimer of A, B and C subunits.

It carries out the reaction L-glutamyl-tRNA(Gln) + L-glutamine + ATP + H2O = L-glutaminyl-tRNA(Gln) + L-glutamate + ADP + phosphate + H(+). Allows the formation of correctly charged Gln-tRNA(Gln) through the transamidation of misacylated Glu-tRNA(Gln) in organisms which lack glutaminyl-tRNA synthetase. The reaction takes place in the presence of glutamine and ATP through an activated gamma-phospho-Glu-tRNA(Gln). This Prosthecochloris aestuarii (strain DSM 271 / SK 413) protein is Glutamyl-tRNA(Gln) amidotransferase subunit A.